A 399-amino-acid polypeptide reads, in one-letter code: UDP-N-acetylglucosamine--N-acetylmuramyl-(pentapeptide) pyrophosphoryl-undecaprenol N-acetylglucosamine transferase (399 aa).

UDP-N-acetyl-alpha-D-glucosamine-binding positions include 29–31 (TAG), asparagine 148, arginine 185, serine 219, and glutamine 318.

The protein belongs to the glycosyltransferase 28 family. MurG subfamily.

It is found in the cell membrane. It catalyses the reaction di-trans,octa-cis-undecaprenyl diphospho-N-acetyl-alpha-D-muramoyl-L-alanyl-D-glutamyl-meso-2,6-diaminopimeloyl-D-alanyl-D-alanine + UDP-N-acetyl-alpha-D-glucosamine = di-trans,octa-cis-undecaprenyl diphospho-[N-acetyl-alpha-D-glucosaminyl-(1-&gt;4)]-N-acetyl-alpha-D-muramoyl-L-alanyl-D-glutamyl-meso-2,6-diaminopimeloyl-D-alanyl-D-alanine + UDP + H(+). The protein operates within cell wall biogenesis; peptidoglycan biosynthesis. In terms of biological role, cell wall formation. Catalyzes the transfer of a GlcNAc subunit on undecaprenyl-pyrophosphoryl-MurNAc-pentapeptide (lipid intermediate I) to form undecaprenyl-pyrophosphoryl-MurNAc-(pentapeptide)GlcNAc (lipid intermediate II). This chain is UDP-N-acetylglucosamine--N-acetylmuramyl-(pentapeptide) pyrophosphoryl-undecaprenol N-acetylglucosamine transferase, found in Mycobacterium ulcerans (strain Agy99).